Consider the following 1102-residue polypeptide: Voltage-gated delayed rectifier potassium channel KCNH8 (1102 aa).

The Cytoplasmic segment spans residues 1 to 225 (MPVMKGLLAP…HFSTFKAGWD (225 aa)). In terms of domain architecture, PAS spans 18–90 (IATRFDGTHS…LQIEKSLEEK (73 aa)). In terms of domain architecture, PAC spans 93–145 (FKGEIMFYKKNGAPFWCLLDIVPIKNEKGDVVLFLASFKDITDTKVKITSEDK). A helical transmembrane segment spans residues 226 to 246 (WLILLATFYVAVTVPYNVCFI). At 247–255 (GNEDLSTTR) the chain is on the extracellular side. A helical membrane pass occupies residues 256-276 (STTVSDIAVEILFIIDIILNF). Residues 277–298 (RTTYVSKSGQVIFEARSICIHY) are Cytoplasmic-facing. The chain crosses the membrane as a helical span at residues 299 to 319 (VTTWFIIDLIAALPFDLLYAF). Asn-320 carries an N-linked (GlcNAc...) asparagine glycan. The Extracellular segment spans residues 320–327 (NVTVVSLV). A helical; Voltage-sensor membrane pass occupies residues 328-348 (HLLKTVRLLRLLRLLQKLDRY). Residues 349–353 (SQHST) are Cytoplasmic-facing. A helical transmembrane segment spans residues 354-374 (IVLTLLMSMFALLAHWMACIW). The Extracellular portion of the chain corresponds to 375–419 (YVIGKMEREDNSLLKWEVGWLHELGKRLESPYYGNNTLGGPSIRS). N-linked (GlcNAc...) asparagine glycosylation is present at Asn-409. Residues 420–440 (AYIAALYFTLSSLTSVGFGNV) constitute an intramembrane region (pore-forming). The Selectivity filter signature appears at 434 to 439 (SVGFGN). The Extracellular segment spans residues 441–448 (SANTDAEK). A helical membrane pass occupies residues 449 to 469 (IFSICTMLIGALMHALVFGNV). Over 470–1102 (TAIIQRMYSR…DVKDSKAINV (633 aa)) the chain is Cytoplasmic. Residues 551–668 (LFECASRGCL…HKFVEDIQHD (118 aa)) are cNMP-binding domain. 4 disordered regions span residues 683–744 (SRLS…KTGS), 762–793 (PFHS…KEKN), 818–845 (EDGN…ISPS), and 960–983 (LVGS…LHHS). The span at 710–723 (VEDEEEEEVEEEET) shows a compositional bias: acidic residues. The segment covering 777–793 (TKQEADPPNHGTRKEKN) has biased composition (basic and acidic residues). Basic and acidic residues predominate over residues 968-982 (TEAHEQSPVDSELHH).

It belongs to the potassium channel family. H (Eag) (TC 1.A.1.20) subfamily. Kv12.1/KCNH8 sub-subfamily. In terms of assembly, the potassium channel is probably composed of a homo- or heterotetrameric complex of pore-forming alpha subunits that can associate with modulating beta subunits. As to expression, detected in superior cervical, mesenteric and coeliac ganglia. Expressed in brain (piriform cortex, olfactory tubercle, cerebral cortex, hippocampus pyramidial cells and dentate gyrus and basal ganglia of caudate/putamen and accumbens nucleus). Expressed in pituitary.

It is found in the membrane. It carries out the reaction K(+)(in) = K(+)(out). Its function is as follows. Pore-forming (alpha) subunit of a voltage-gated delayed rectifier potassium channel that mediates outward-rectifying potassium currents. Elicits a slowly activating, non-inactivating and slowly deactivation outwards potassium current at depolarizating voltages from -30 mV to +50mV. Shows no obvious change in the activation rate from different holding potentials. Activation is strongly dependent on the pH of the external solution. The protein is Voltage-gated delayed rectifier potassium channel KCNH8 of Rattus norvegicus (Rat).